Reading from the N-terminus, the 447-residue chain is Cysteine--tRNA ligase (447 aa).

Zn(2+) is bound at residue Cys28. A 'HIGH' region motif is present at residues 30–40 (PTVYNYIHIGN). Positions 211, 236, and 240 each coordinate Zn(2+). The short motif at 268–272 (KMSKS) is the 'KMSKS' region element. Lys271 serves as a coordination point for ATP.

It belongs to the class-I aminoacyl-tRNA synthetase family. In terms of assembly, monomer. Requires Zn(2+) as cofactor.

The protein resides in the cytoplasm. It catalyses the reaction tRNA(Cys) + L-cysteine + ATP = L-cysteinyl-tRNA(Cys) + AMP + diphosphate. This chain is Cysteine--tRNA ligase, found in Streptococcus agalactiae serotype III (strain NEM316).